The following is a 1101-amino-acid chain: Lysylphosphatidylglycerol biosynthesis bifunctional protein LysX (1101 aa).

The interval 1 to 601 is phosphatidylglycerol lysyltransferase; that stretch reads MTATRLVRAH…RLHSDGTAPD (601 aa). Transmembrane regions (helical) follow at residues 18-38, 60-80, 84-104, 113-133, 151-171, 183-200, and 207-227; these read VPAA…LASV, FPDT…ALAA, IAWW…VTGL, DVGE…LLLA, VTLV…LELF, YALN…GAFS, and VNAL…VVLF. The segment at 602–1101 is lysine--tRNA ligase; it reads RIGPVGDGAD…TLPFPLAKPR (500 aa). A DNA-binding region (OB) is located at residues 662–740; sequence VTVSGRVLRA…SVLVTRWRLI (79 aa). Positions 1013 and 1020 each coordinate Mg(2+).

It in the N-terminal section; belongs to the LPG synthetase family. The protein in the C-terminal section; belongs to the class-II aminoacyl-tRNA synthetase family. Mg(2+) is required as a cofactor.

The protein resides in the cell membrane. It catalyses the reaction tRNA(Lys) + L-lysine + ATP = L-lysyl-tRNA(Lys) + AMP + diphosphate. It carries out the reaction L-lysyl-tRNA(Lys) + a 1,2-diacyl-sn-glycero-3-phospho-(1'-sn-glycerol) = a 1,2-diacyl-sn-glycero-3-phospho-1'-(3'-O-L-lysyl)-sn-glycerol + tRNA(Lys). Catalyzes the production of L-lysyl-tRNA(Lys)transfer and the transfer of a lysyl group from L-lysyl-tRNA(Lys) to membrane-bound phosphatidylglycerol (PG), which produces lysylphosphatidylglycerol (LPG), one of the components of the bacterial membrane with a positive net charge. LPG synthesis contributes to the resistance to cationic antimicrobial peptides (CAMPs) and likely protects M.tuberculosis against the CAMPs produced by competiting microorganisms (bacteriocins). In fact, the modification of anionic phosphatidylglycerol with positively charged L-lysine results in repulsion of the peptides. The chain is Lysylphosphatidylglycerol biosynthesis bifunctional protein LysX (lysX) from Mycolicibacterium gilvum (strain PYR-GCK) (Mycobacterium gilvum (strain PYR-GCK)).